The following is a 179-amino-acid chain: MQKAVVLDEQAIRRALTRIAHEIIERNKGIDDCVLIGIKTRGIYLAKRLAERIEQIEGKAVPVGELDITLYRDDLTVKTIDHEPLVKGTDVPFDVTNKKVILVDDVLFTGRTVRAAMDAVMDLGRPAQIQLAVLVDRGHRELPIRADFVGKNIPTSSSELIVVELTEVDQLDQVSIHEK.

The PRPP-binding signature appears at 100–112 (VILVDDVLFTGRT).

Belongs to the purine/pyrimidine phosphoribosyltransferase family. PyrR subfamily. Homodimer and homohexamer; in equilibrium.

The catalysed reaction is UMP + diphosphate = 5-phospho-alpha-D-ribose 1-diphosphate + uracil. Regulates transcriptional attenuation of the pyrimidine nucleotide (pyr) operon by binding in a uridine-dependent manner to specific sites on pyr mRNA. This disrupts an antiterminator hairpin in the RNA and favors formation of a downstream transcription terminator, leading to a reduced expression of downstream genes. Functionally, also displays a weak uracil phosphoribosyltransferase activity which is not physiologically significant. The chain is Bifunctional protein PyrR from Geobacillus sp. (strain WCH70).